A 322-amino-acid chain; its full sequence is Lipoyl synthase (322 aa).

Positions 1–12 (MVTVLNTVNQSG) are enriched in polar residues. Residues 1–22 (MVTVLNTVNQSGRLRHPEKAHR) form a disordered region. 7 residues coordinate [4Fe-4S] cluster: Cys60, Cys65, Cys71, Cys86, Cys90, Cys93, and Ser299. The 217-residue stretch at 72–288 (WEKKHATFMI…ETIGKTKGFL (217 aa)) folds into the Radical SAM core domain.

This sequence belongs to the radical SAM superfamily. Lipoyl synthase family. The cofactor is [4Fe-4S] cluster.

It is found in the cytoplasm. The catalysed reaction is [[Fe-S] cluster scaffold protein carrying a second [4Fe-4S](2+) cluster] + N(6)-octanoyl-L-lysyl-[protein] + 2 oxidized [2Fe-2S]-[ferredoxin] + 2 S-adenosyl-L-methionine + 4 H(+) = [[Fe-S] cluster scaffold protein] + N(6)-[(R)-dihydrolipoyl]-L-lysyl-[protein] + 4 Fe(3+) + 2 hydrogen sulfide + 2 5'-deoxyadenosine + 2 L-methionine + 2 reduced [2Fe-2S]-[ferredoxin]. Its pathway is protein modification; protein lipoylation via endogenous pathway; protein N(6)-(lipoyl)lysine from octanoyl-[acyl-carrier-protein]: step 2/2. Functionally, catalyzes the radical-mediated insertion of two sulfur atoms into the C-6 and C-8 positions of the octanoyl moiety bound to the lipoyl domains of lipoate-dependent enzymes, thereby converting the octanoylated domains into lipoylated derivatives. This chain is Lipoyl synthase, found in Brucella abortus (strain S19).